The chain runs to 479 residues: Kynurenine 3-monooxygenase (479 aa).

It belongs to the aromatic-ring hydroxylase family. KMO subfamily. Requires FAD as cofactor.

It localises to the mitochondrion outer membrane. The enzyme catalyses L-kynurenine + NADPH + O2 + H(+) = 3-hydroxy-L-kynurenine + NADP(+) + H2O. The protein operates within cofactor biosynthesis; NAD(+) biosynthesis; quinolinate from L-kynurenine: step 1/3. Catalyzes the hydroxylation of L-kynurenine (L-Kyn) to form 3-hydroxy-L-kynurenine (L-3OHKyn). Required for synthesis of quinolinic acid. The polypeptide is Kynurenine 3-monooxygenase (Chaetomium globosum (strain ATCC 6205 / CBS 148.51 / DSM 1962 / NBRC 6347 / NRRL 1970) (Soil fungus)).